A 192-amino-acid polypeptide reads, in one-letter code: dTTP/UTP pyrophosphatase (192 aa).

Aspartate 71 acts as the Proton acceptor in catalysis.

It belongs to the Maf family. YhdE subfamily. Requires a divalent metal cation as cofactor.

The protein localises to the cytoplasm. It carries out the reaction dTTP + H2O = dTMP + diphosphate + H(+). It catalyses the reaction UTP + H2O = UMP + diphosphate + H(+). Nucleoside triphosphate pyrophosphatase that hydrolyzes dTTP and UTP. May have a dual role in cell division arrest and in preventing the incorporation of modified nucleotides into cellular nucleic acids. The sequence is that of dTTP/UTP pyrophosphatase from Clostridium kluyveri (strain NBRC 12016).